The chain runs to 195 residues: Probable nicotinate-nucleotide adenylyltransferase (195 aa).

This sequence belongs to the NadD family.

The catalysed reaction is nicotinate beta-D-ribonucleotide + ATP + H(+) = deamido-NAD(+) + diphosphate. Its pathway is cofactor biosynthesis; NAD(+) biosynthesis; deamido-NAD(+) from nicotinate D-ribonucleotide: step 1/1. Functionally, catalyzes the reversible adenylation of nicotinate mononucleotide (NaMN) to nicotinic acid adenine dinucleotide (NaAD). This is Probable nicotinate-nucleotide adenylyltransferase from Chlorobaculum tepidum (strain ATCC 49652 / DSM 12025 / NBRC 103806 / TLS) (Chlorobium tepidum).